We begin with the raw amino-acid sequence, 321 residues long: Ribosomal RNA small subunit methyltransferase H (321 aa).

S-adenosyl-L-methionine-binding positions include 29 to 31, aspartate 48, tyrosine 76, aspartate 97, and glutamine 104; that span reads GGH. Residues 277–321 are disordered; that stretch reads LTRGAEPASETEKAENPRAASVRLRAVERTAPNPDHTRKPTGGAS.

Belongs to the methyltransferase superfamily. RsmH family.

The protein localises to the cytoplasm. It catalyses the reaction cytidine(1402) in 16S rRNA + S-adenosyl-L-methionine = N(4)-methylcytidine(1402) in 16S rRNA + S-adenosyl-L-homocysteine + H(+). Its function is as follows. Specifically methylates the N4 position of cytidine in position 1402 (C1402) of 16S rRNA. The polypeptide is Ribosomal RNA small subunit methyltransferase H (Frankia casuarinae (strain DSM 45818 / CECT 9043 / HFP020203 / CcI3)).